We begin with the raw amino-acid sequence, 409 residues long: Probable plastid-lipid-associated protein 12, chloroplastic (409 aa).

The N-terminal 55 residues, M1–S55, are a transit peptide targeting the chloroplast.

The protein belongs to the PAP/fibrillin family.

Its subcellular location is the plastid. It localises to the chloroplast thylakoid. This Arabidopsis thaliana (Mouse-ear cress) protein is Probable plastid-lipid-associated protein 12, chloroplastic (PAP12).